Here is a 311-residue protein sequence, read N- to C-terminus: Putative ribose-phosphate pyrophosphokinase 2 (311 aa).

ATP is bound by residues 38-40 (DGE) and 97-98 (RQ). Residues His-131 and Asp-171 each coordinate Mg(2+). Position 219 (Asp-219) interacts with D-ribose 5-phosphate.

The protein belongs to the ribose-phosphate pyrophosphokinase family. Class I subfamily. In terms of assembly, homohexamer. Mg(2+) serves as cofactor.

It localises to the cytoplasm. The catalysed reaction is D-ribose 5-phosphate + ATP = 5-phospho-alpha-D-ribose 1-diphosphate + AMP + H(+). Its pathway is metabolic intermediate biosynthesis; 5-phospho-alpha-D-ribose 1-diphosphate biosynthesis; 5-phospho-alpha-D-ribose 1-diphosphate from D-ribose 5-phosphate (route I): step 1/1. Functionally, involved in the biosynthesis of the central metabolite phospho-alpha-D-ribosyl-1-pyrophosphate (PRPP) via the transfer of pyrophosphoryl group from ATP to 1-hydroxyl of ribose-5-phosphate (Rib-5-P). This chain is Putative ribose-phosphate pyrophosphokinase 2, found in Listeria innocua serovar 6a (strain ATCC BAA-680 / CLIP 11262).